Here is a 535-residue protein sequence, read N- to C-terminus: Dipeptide-binding protein (535 aa).

The N-terminal stretch at 1–28 is a signal peptide; it reads MRISLKKSGMLKLGLSLVAMTVAASVQA. An intrachain disulfide couples cysteine 34 to cysteine 262. Residues 48–50, 383–385, and 433–436 each bind glycyl-L-leucine; these read TSG, RPY, and WTGD. A disulfide bridge links cysteine 450 with cysteine 463.

The protein belongs to the bacterial solute-binding protein 5 family. The complex is composed of two ATP-binding proteins (DppD and DppF), two transmembrane proteins (DppB and DppC) and a solute-binding protein (DppA).

It localises to the periplasm. Its activity is regulated as follows. Heme binding is inhibited by dipeptide. Part of the ABC transporter DppABCDF involved in dipeptide transport. Binds dipeptides and accepts a wide range of side chains, including small neutral, bulky hydrophobic, and positively and negatively charged groups. Tripeptides are poor substrates. DppA alone controls the specificity of the Dpp transporter. In addition, plays a role in chemotaxis toward peptides via interaction with the chemotaxis protein Tap. Functionally, binds heme. When a foreign outer membrane heme receptor is expressed in E.coli, DppABCDF can also transport heme and its precursor, 5-aminolevulinic acid (ALA), from the periplasm into the cytoplasm. The chain is Dipeptide-binding protein from Escherichia coli (strain K12).